Reading from the N-terminus, the 125-residue chain is Small ribosomal subunit protein uS12 (125 aa).

The interval 9–31 (RQGREVEKIKSKSPAMENSPQRR) is disordered. The residue at position 89 (aspartate 89) is a 3-methylthioaspartic acid. The interval 106 to 125 (GVKDRKQSRSKYGAKRPKKA) is disordered. The segment covering 113 to 125 (SRSKYGAKRPKKA) has biased composition (basic residues).

Belongs to the universal ribosomal protein uS12 family. Part of the 30S ribosomal subunit. Contacts proteins S8 and S17. May interact with IF1 in the 30S initiation complex.

Its function is as follows. With S4 and S5 plays an important role in translational accuracy. In terms of biological role, interacts with and stabilizes bases of the 16S rRNA that are involved in tRNA selection in the A site and with the mRNA backbone. Located at the interface of the 30S and 50S subunits, it traverses the body of the 30S subunit contacting proteins on the other side and probably holding the rRNA structure together. The combined cluster of proteins S8, S12 and S17 appears to hold together the shoulder and platform of the 30S subunit. The sequence is that of Small ribosomal subunit protein uS12 from Polaromonas sp. (strain JS666 / ATCC BAA-500).